Consider the following 461-residue polypeptide: Cysteine--tRNA ligase (461 aa).

Cys-28 contributes to the Zn(2+) binding site. Positions 30-40 match the 'HIGH' region motif; that stretch reads ITVYDLCHIGH. Cys-209, His-234, and Glu-238 together coordinate Zn(2+). The short motif at 266–270 is the 'KMSKS' region element; sequence KMSKS. An ATP-binding site is contributed by Lys-269.

Belongs to the class-I aminoacyl-tRNA synthetase family. Monomer. Zn(2+) serves as cofactor.

It localises to the cytoplasm. It carries out the reaction tRNA(Cys) + L-cysteine + ATP = L-cysteinyl-tRNA(Cys) + AMP + diphosphate. In Cronobacter sakazakii (strain ATCC BAA-894) (Enterobacter sakazakii), this protein is Cysteine--tRNA ligase.